The sequence spans 127 residues: Aspartate 1-decarboxylase (127 aa).

The Schiff-base intermediate with substrate; via pyruvic acid role is filled by S25. S25 is subject to Pyruvic acid (Ser). Position 57 (T57) interacts with substrate. Y58 functions as the Proton donor in the catalytic mechanism. 73–75 (GAA) contacts substrate.

The protein belongs to the PanD family. In terms of assembly, heterooctamer of four alpha and four beta subunits. It depends on pyruvate as a cofactor. Post-translationally, is synthesized initially as an inactive proenzyme, which is activated by self-cleavage at a specific serine bond to produce a beta-subunit with a hydroxyl group at its C-terminus and an alpha-subunit with a pyruvoyl group at its N-terminus.

It is found in the cytoplasm. The enzyme catalyses L-aspartate + H(+) = beta-alanine + CO2. It participates in cofactor biosynthesis; (R)-pantothenate biosynthesis; beta-alanine from L-aspartate: step 1/1. In terms of biological role, catalyzes the pyruvoyl-dependent decarboxylation of aspartate to produce beta-alanine. The polypeptide is Aspartate 1-decarboxylase (Exiguobacterium sibiricum (strain DSM 17290 / CCUG 55495 / CIP 109462 / JCM 13490 / 255-15)).